The following is a 157-amino-acid chain: Probable chemoreceptor glutamine deamidase CheD (157 aa).

It belongs to the CheD family.

It catalyses the reaction L-glutaminyl-[protein] + H2O = L-glutamyl-[protein] + NH4(+). In terms of biological role, probably deamidates glutamine residues to glutamate on methyl-accepting chemotaxis receptors (MCPs), playing an important role in chemotaxis. The chain is Probable chemoreceptor glutamine deamidase CheD from Archaeoglobus fulgidus (strain ATCC 49558 / DSM 4304 / JCM 9628 / NBRC 100126 / VC-16).